The primary structure comprises 70 residues: ATP synthase subunit c (70 aa).

The next 2 membrane-spanning stretches (helical) occupy residues 4–24 (IAAA…NGLI) and 45–65 (IMFI…VIAF).

Belongs to the ATPase C chain family. F-type ATPases have 2 components, F(1) - the catalytic core - and F(0) - the membrane proton channel. F(1) has five subunits: alpha(3), beta(3), gamma(1), delta(1), epsilon(1). F(0) has three main subunits: a(1), b(2) and c(10-14). The alpha and beta chains form an alternating ring which encloses part of the gamma chain. F(1) is attached to F(0) by a central stalk formed by the gamma and epsilon chains, while a peripheral stalk is formed by the delta and b chains.

The protein resides in the cell membrane. In terms of biological role, f(1)F(0) ATP synthase produces ATP from ADP in the presence of a proton or sodium gradient. F-type ATPases consist of two structural domains, F(1) containing the extramembraneous catalytic core and F(0) containing the membrane proton channel, linked together by a central stalk and a peripheral stalk. During catalysis, ATP synthesis in the catalytic domain of F(1) is coupled via a rotary mechanism of the central stalk subunits to proton translocation. Functionally, key component of the F(0) channel; it plays a direct role in translocation across the membrane. A homomeric c-ring of between 10-14 subunits forms the central stalk rotor element with the F(1) delta and epsilon subunits. This chain is ATP synthase subunit c, found in Staphylococcus aureus (strain Mu3 / ATCC 700698).